A 364-amino-acid chain; its full sequence is Mannose-1-phosphate guanyltransferase (364 aa).

The protein belongs to the transferase hexapeptide repeat family.

The protein resides in the cytoplasm. It carries out the reaction alpha-D-mannose 1-phosphate + GTP + H(+) = GDP-alpha-D-mannose + diphosphate. The protein operates within nucleotide-sugar biosynthesis; GDP-alpha-D-mannose biosynthesis; GDP-alpha-D-mannose from alpha-D-mannose 1-phosphate (GTP route): step 1/1. Its function is as follows. Involved in cell wall synthesis where it is required for glycosylation. Involved in cell cycle progression through cell-size checkpoint. This is Mannose-1-phosphate guanyltransferase (mpg1) from Emericella nidulans (strain FGSC A4 / ATCC 38163 / CBS 112.46 / NRRL 194 / M139) (Aspergillus nidulans).